Here is a 108-residue protein sequence, read N- to C-terminus: Class I hydrophobin 3 (108 aa).

The first 17 residues, 1-17 (MFSRVFAVASLAALALA), serve as a signal peptide directing secretion. Intrachain disulfides connect Cys26–Cys87, Cys33–Cys81, Cys34–Cys67, and Cys88–Cys101.

It belongs to the fungal hydrophobin family. In terms of assembly, self-assembles to form functional amyloid fibrils called rodlets. Self-assembly into fibrillar rodlets occurs spontaneously at hydrophobic:hydrophilic interfaces and the rodlets further associate laterally to form amphipathic monolayers.

It localises to the secreted. The protein localises to the cell wall. In terms of biological role, aerial growth, conidiation, and dispersal of filamentous fungi in the environment rely upon a capability of their secreting small amphipathic proteins called hydrophobins (HPBs) with low sequence identity. Class I can self-assemble into an outermost layer of rodlet bundles on aerial cell surfaces, conferring cellular hydrophobicity that supports fungal growth, development and dispersal; whereas Class II form highly ordered films at water-air interfaces through intermolecular interactions but contribute nothing to the rodlet structure. In Pisolithus tinctorius (Dead man's foot), this protein is Class I hydrophobin 3.